The following is a 131-amino-acid chain: Sec-independent protein translocase protein TatB (131 aa).

A helical membrane pass occupies residues 2-22 (FDGIGFMELLLIGVLGLVVLG). The interval 69 to 131 (NQGLKNLAPE…ENAKSDKPNG (63 aa)) is disordered. The span at 105 to 123 (AKETPAKETATTETTSTEN) shows a compositional bias: low complexity.

Belongs to the TatB family. In terms of assembly, the Tat system comprises two distinct complexes: a TatABC complex, containing multiple copies of TatA, TatB and TatC subunits, and a separate TatA complex, containing only TatA subunits. Substrates initially bind to the TatABC complex, which probably triggers association of the separate TatA complex to form the active translocon.

The protein localises to the cell inner membrane. Its function is as follows. Part of the twin-arginine translocation (Tat) system that transports large folded proteins containing a characteristic twin-arginine motif in their signal peptide across membranes. Together with TatC, TatB is part of a receptor directly interacting with Tat signal peptides. TatB may form an oligomeric binding site that transiently accommodates folded Tat precursor proteins before their translocation. This Shewanella piezotolerans (strain WP3 / JCM 13877) protein is Sec-independent protein translocase protein TatB.